The primary structure comprises 936 residues: Protein translocase subunit SecA (936 aa).

ATP-binding positions include Gln87, 105-109 (GEGKT), and Asp515. 4 residues coordinate Zn(2+): Cys920, Cys922, Cys931, and His932.

It belongs to the SecA family. Monomer and homodimer. Part of the essential Sec protein translocation apparatus which comprises SecA, SecYEG and auxiliary proteins SecDF-YajC and YidC. Zn(2+) is required as a cofactor.

The protein resides in the cell inner membrane. The protein localises to the cytoplasm. It catalyses the reaction ATP + H2O + cellular proteinSide 1 = ADP + phosphate + cellular proteinSide 2.. Its function is as follows. Part of the Sec protein translocase complex. Interacts with the SecYEG preprotein conducting channel. Has a central role in coupling the hydrolysis of ATP to the transfer of proteins into and across the cell membrane, serving both as a receptor for the preprotein-SecB complex and as an ATP-driven molecular motor driving the stepwise translocation of polypeptide chains across the membrane. This is Protein translocase subunit SecA from Paraburkholderia xenovorans (strain LB400).